Consider the following 300-residue polypeptide: N-acetylmannosamine kinase (300 aa).

ATP-binding positions include 5-12 (ALDIGGTK) and 132-139 (GVGGGIVL). The Zn(2+) site is built by His-156, Cys-166, Cys-168, and Cys-173.

This sequence belongs to the ROK (NagC/XylR) family. NanK subfamily. In terms of assembly, homodimer.

The catalysed reaction is an N-acyl-D-mannosamine + ATP = an N-acyl-D-mannosamine 6-phosphate + ADP + H(+). It functions in the pathway amino-sugar metabolism; N-acetylneuraminate degradation; D-fructose 6-phosphate from N-acetylneuraminate: step 2/5. In terms of biological role, catalyzes the phosphorylation of N-acetylmannosamine (ManNAc) to ManNAc-6-P. In Haemophilus influenzae (strain PittEE), this protein is N-acetylmannosamine kinase.